Consider the following 1025-residue polypeptide: Multidrug resistance protein MdtC (1025 aa).

12 consecutive transmembrane segments (helical) span residues 16-36 (LLTL…PVAP), 333-353 (EVEQ…FVFL), 360-380 (LIPA…MYLC), 387-407 (LSLM…IVVL), 431-451 (VGFT…PLLM), 459-479 (FFAE…FVSV), 528-548 (WVLL…ISIP), 853-873 (LWLM…LYES), 875-895 (VHPL…LLAL), 897-917 (LFDT…IGIV), 953-973 (PILM…LTSG), and 984-1004 (ITIA…TPVV).

This sequence belongs to the resistance-nodulation-cell division (RND) (TC 2.A.6) family. MdtC subfamily. As to quaternary structure, part of a tripartite efflux system composed of MdtA, MdtB and MdtC. MdtC forms a heteromultimer with MdtB.

It localises to the cell inner membrane. The chain is Multidrug resistance protein MdtC from Pantoea ananatis (strain AJ13355).